The chain runs to 146 residues: Ribonuclease H (146 aa).

The region spanning 1 to 143 (MKKRVTIYTD…CDELARQAIK (143 aa)) is the RNase H type-1 domain. Mg(2+) is bound by residues Asp10, Glu48, Asp70, and Asp135.

This sequence belongs to the RNase H family. As to quaternary structure, monomer. Mg(2+) is required as a cofactor.

Its subcellular location is the cytoplasm. It catalyses the reaction Endonucleolytic cleavage to 5'-phosphomonoester.. Endonuclease that specifically degrades the RNA of RNA-DNA hybrids. The sequence is that of Ribonuclease H from Chlorobium limicola (strain DSM 245 / NBRC 103803 / 6330).